The chain runs to 323 residues: Aldo-keto reductase family 1 member C2 (323 aa).

NADP(+) is bound by residues 20–24 (GFGTY) and Asp-50. Residue Tyr-24 coordinates substrate. The active-site Proton donor is Tyr-55. Substrate is bound at residue His-117. NADP(+) is bound by residues 166 to 167 (SN), Gln-190, and 216 to 222 (YSALGSH). Substrate contacts are provided by His-222 and Trp-227. 270-280 (KSYNEQRIRQN) contacts NADP(+).

It belongs to the aldo/keto reductase family. In terms of tissue distribution, expressed in fetal testes. Expressed in fetal and adult adrenal glands.

Its subcellular location is the cytoplasm. It localises to the cytosol. It catalyses the reaction a 3alpha-hydroxysteroid + NADP(+) = a 3-oxosteroid + NADPH + H(+). The catalysed reaction is a 3alpha-hydroxysteroid + NAD(+) = a 3-oxosteroid + NADH + H(+). The enzyme catalyses 5alpha-androstane-3alpha,17beta-diol + NADP(+) = 17beta-hydroxy-5alpha-androstan-3-one + NADPH + H(+). It carries out the reaction 5alpha-androstane-3alpha,17beta-diol + NAD(+) = 17beta-hydroxy-5alpha-androstan-3-one + NADH + H(+). It catalyses the reaction 5alpha-androstane-3alpha,17beta-diol + NAD(+) = androsterone + NADH + H(+). The catalysed reaction is 17beta-estradiol + NADP(+) = estrone + NADPH + H(+). The enzyme catalyses 17beta-estradiol + NAD(+) = estrone + NADH + H(+). It carries out the reaction (20S)-hydroxypregn-4-en-3-one + NADP(+) = progesterone + NADPH + H(+). It catalyses the reaction (20S)-hydroxypregn-4-en-3-one + NAD(+) = progesterone + NADH + H(+). The catalysed reaction is androsterone + NADP(+) = 5alpha-androstan-3,17-dione + NADPH + H(+). The enzyme catalyses (3beta,5alpha,17beta)-3-hydroxy-androstan-17-yl sulfate + NADP(+) = 5alpha-dihydrotestosterone sulfate + NADPH + H(+). It carries out the reaction (1R,2R)-1,2-dihydrobenzene-1,2-diol + NADP(+) = catechol + NADPH + H(+). It catalyses the reaction (S)-indan-1-ol + NAD(+) = indan-1-one + NADH + H(+). The catalysed reaction is (S)-indan-1-ol + NADP(+) = indan-1-one + NADPH + H(+). It functions in the pathway steroid metabolism. Its activity is regulated as follows. Inhibited by hexestrol with an IC(50) of 2.8 uM, 1,10-phenanthroline with an IC(50) of 2100 uM, 1,7-phenanthroline with an IC(50) of 1500 uM, flufenamic acid with an IC(50) of 0.9 uM, indomethacin with an IC(50) of 75 uM, ibuprofen with an IC(50) of 6.9 uM, lithocholic acid with an IC(50) of 0.07 uM, ursodeoxycholic acid with an IC(50) of 0.08 uM and chenodeoxycholic acid with an IC(50) of 0.13 uM. The oxidation reaction is inhibited by low micromolar concentrations of NADPH. Functionally, cytosolic aldo-keto reductase that catalyzes the NADH and NADPH-dependent reduction of ketosteroids to hydroxysteroids. Most probably acts as a reductase in vivo since the oxidase activity measured in vitro is inhibited by physiological concentrations of NADPH. Displays a broad positional specificity acting on positions 3, 17 and 20 of steroids and regulates the metabolism of hormones like estrogens and androgens. Works in concert with the 5-alpha/5-beta-steroid reductases to convert steroid hormones into the 3-alpha/5-alpha and 3-alpha/5-beta-tetrahydrosteroids. Catalyzes the inactivation of the most potent androgen 5-alpha-dihydrotestosterone (5-alpha-DHT) to 5-alpha-androstane-3-alpha,17-beta-diol (3-alpha-diol). Also specifically able to produce 17beta-hydroxy-5alpha-androstan-3-one/5alphaDHT. May also reduce conjugated steroids such as 5alpha-dihydrotestosterone sulfate. Displays affinity for bile acids. The sequence is that of Aldo-keto reductase family 1 member C2 (AKR1C2) from Homo sapiens (Human).